The following is a 186-amino-acid chain: Elongation factor P (186 aa).

It belongs to the elongation factor P family.

Its subcellular location is the cytoplasm. It participates in protein biosynthesis; polypeptide chain elongation. Functionally, involved in peptide bond synthesis. Stimulates efficient translation and peptide-bond synthesis on native or reconstituted 70S ribosomes in vitro. Probably functions indirectly by altering the affinity of the ribosome for aminoacyl-tRNA, thus increasing their reactivity as acceptors for peptidyl transferase. The protein is Elongation factor P of Polynucleobacter necessarius subsp. necessarius (strain STIR1).